Consider the following 215-residue polypeptide: 3-isopropylmalate dehydratase small subunit (215 aa).

This sequence belongs to the LeuD family. LeuD type 1 subfamily. In terms of assembly, heterodimer of LeuC and LeuD.

The catalysed reaction is (2R,3S)-3-isopropylmalate = (2S)-2-isopropylmalate. It functions in the pathway amino-acid biosynthesis; L-leucine biosynthesis; L-leucine from 3-methyl-2-oxobutanoate: step 2/4. Its function is as follows. Catalyzes the isomerization between 2-isopropylmalate and 3-isopropylmalate, via the formation of 2-isopropylmaleate. In Xylella fastidiosa (strain M23), this protein is 3-isopropylmalate dehydratase small subunit.